Consider the following 285-residue polypeptide: NAD kinase (285 aa).

Residue Asp68 is the Proton acceptor of the active site. Residues 68-69, 142-143, Arg153, Lys170, Asp172, 183-188, and Gln242 each bind NAD(+); these read DG, ND, and TAYNLS.

The protein belongs to the NAD kinase family. Requires a divalent metal cation as cofactor.

Its subcellular location is the cytoplasm. It carries out the reaction NAD(+) + ATP = ADP + NADP(+) + H(+). Its function is as follows. Involved in the regulation of the intracellular balance of NAD and NADP, and is a key enzyme in the biosynthesis of NADP. Catalyzes specifically the phosphorylation on 2'-hydroxyl of the adenosine moiety of NAD to yield NADP. This is NAD kinase from Syntrophotalea carbinolica (strain DSM 2380 / NBRC 103641 / GraBd1) (Pelobacter carbinolicus).